The following is a 275-amino-acid chain: Large ribosomal subunit protein uL2 (275 aa).

Residues 28 to 38 are compositionally biased toward basic and acidic residues; the sequence is EPYAPLLDKKS. 2 disordered regions span residues 28-55 and 224-258; these read EPYA…RHVG and AMNP…GYKT.

The protein belongs to the universal ribosomal protein uL2 family. In terms of assembly, part of the 50S ribosomal subunit. Forms a bridge to the 30S subunit in the 70S ribosome.

Its function is as follows. One of the primary rRNA binding proteins. Required for association of the 30S and 50S subunits to form the 70S ribosome, for tRNA binding and peptide bond formation. It has been suggested to have peptidyltransferase activity; this is somewhat controversial. Makes several contacts with the 16S rRNA in the 70S ribosome. This is Large ribosomal subunit protein uL2 from Cellvibrio japonicus (strain Ueda107) (Pseudomonas fluorescens subsp. cellulosa).